We begin with the raw amino-acid sequence, 268 residues long: Ubiquinone biosynthesis protein COQ4 homolog 1, mitochondrial (268 aa).

Over residues 1–10 (MFLRRVHPVR) the composition is skewed to basic residues. Residues 1-18 (MFLRRVHPVRLGHASQRS) constitute a mitochondrion transit peptide. The disordered stretch occupies residues 1 to 44 (MFLRRVHPVRLGHASQRSLTTTKSRNESTTTTVEAPQAAPSPPP). Residues 20–38 (TTTKSRNESTTTTVEAPQA) show a composition bias toward low complexity. Zn(2+) is bound by residues histidine 177, aspartate 178, histidine 181, and glutamate 193.

The protein belongs to the COQ4 family. In terms of assembly, component of a multi-subunit COQ enzyme complex. It depends on Zn(2+) as a cofactor.

It localises to the mitochondrion inner membrane. The catalysed reaction is a 4-hydroxy-3-methoxy-5-(all-trans-polyprenyl)benzoate + H(+) = a 2-methoxy-6-(all-trans-polyprenyl)phenol + CO2. It functions in the pathway cofactor biosynthesis; ubiquinone biosynthesis. Lyase that catalyzes the C1-decarboxylation of 4-hydroxy-3-methoxy-5-(all-trans-polyprenyl)benzoic acid into 2-methoxy-6-(all-trans-polyprenyl)phenol during ubiquinone biosynthesis. This chain is Ubiquinone biosynthesis protein COQ4 homolog 1, mitochondrial, found in Culex quinquefasciatus (Southern house mosquito).